The following is a 1194-amino-acid chain: Immunoglobulin superfamily member 3 (1194 aa).

The first 19 residues, 1–19, serve as a signal peptide directing secretion; it reads MKCFFPVLSCLAVLGVVSA. 8 Ig-like C2-type domains span residues 20-138, 143-262, 276-386, 401-539, 545-661, 676-803, 813-945, and 949-1097; these read QRQV…AKMN, PDSL…WYAM, PTDK…KTVT, PIIV…ISIT, FAVT…WTRL, PVTK…EEVS, PDSR…TALT, and PDAS…YRLT. At 20 to 1124 the chain is on the extracellular side; the sequence is QRQVTVQEGP…LQSIICSNDA (1105 aa). 2 disulfides stabilise this stretch: cysteine 42–cysteine 120 and cysteine 167–cysteine 246. Asparagine 43 carries N-linked (GlcNAc...) asparagine glycosylation. The EWI motif motif lies at 250–252; that stretch reads EWI. An intrachain disulfide couples cysteine 302 to cysteine 376. Asparagine 418 carries an N-linked (GlcNAc...) asparagine glycan. 2 disulfides stabilise this stretch: cysteine 432-cysteine 511 and cysteine 566-cysteine 645. A glycan (N-linked (GlcNAc...) asparagine) is linked at asparagine 655. Disulfide bonds link cysteine 701/cysteine 782, cysteine 838/cysteine 918, and cysteine 974/cysteine 1080. N-linked (GlcNAc...) asparagine glycosylation is present at asparagine 842. Residues 997–1033 form a disordered region; sequence AGGKRSSPGLEEQEEEREEEEEEDDDDDDDPTERTAL. Positions 1007–1027 are enriched in acidic residues; sequence EEQEEEREEEEEEDDDDDDDP. The N-linked (GlcNAc...) asparagine glycan is linked to asparagine 1077. Residues 1125–1145 traverse the membrane as a helical segment; it reads LFYFVFFYPFPIFGILIITIL. The Cytoplasmic portion of the chain corresponds to 1146-1194; it reads LVRFKSRNSSKNSDGKNGVPLLWIKEPHLNYSPTCLEPPVLSIHPGAID.

Expressed in a wide range of tissues with High expression in Placenta, kidney and lung.

The protein localises to the membrane. The polypeptide is Immunoglobulin superfamily member 3 (IGSF3) (Homo sapiens (Human)).